A 120-amino-acid chain; its full sequence is NAD(P)H-quinone oxidoreductase subunit 3, chloroplastic (120 aa).

The next 3 helical transmembrane spans lie at 7–27 (YDSF…AFSI), 63–83 (YMFA…YPWA), and 89–109 (LGLF…VGLV).

It belongs to the complex I subunit 3 family. NDH is composed of at least 16 different subunits, 5 of which are encoded in the nucleus.

The protein resides in the plastid. It localises to the chloroplast thylakoid membrane. It carries out the reaction a plastoquinone + NADH + (n+1) H(+)(in) = a plastoquinol + NAD(+) + n H(+)(out). The enzyme catalyses a plastoquinone + NADPH + (n+1) H(+)(in) = a plastoquinol + NADP(+) + n H(+)(out). NDH shuttles electrons from NAD(P)H:plastoquinone, via FMN and iron-sulfur (Fe-S) centers, to quinones in the photosynthetic chain and possibly in a chloroplast respiratory chain. The immediate electron acceptor for the enzyme in this species is believed to be plastoquinone. Couples the redox reaction to proton translocation, and thus conserves the redox energy in a proton gradient. This chain is NAD(P)H-quinone oxidoreductase subunit 3, chloroplastic, found in Adiantum capillus-veneris (Maidenhair fern).